Here is a 526-residue protein sequence, read N- to C-terminus: ATP synthase subunit alpha (526 aa).

171 to 178 (GDRQTGKT) lines the ATP pocket.

It belongs to the ATPase alpha/beta chains family. In terms of assembly, F-type ATPases have 2 components, CF(1) - the catalytic core - and CF(0) - the membrane proton channel. CF(1) has five subunits: alpha(3), beta(3), gamma(1), delta(1), epsilon(1). CF(0) has three main subunits: a(1), b(2) and c(9-12). The alpha and beta chains form an alternating ring which encloses part of the gamma chain. CF(1) is attached to CF(0) by a central stalk formed by the gamma and epsilon chains, while a peripheral stalk is formed by the delta and b chains.

The protein resides in the cell membrane. It carries out the reaction ATP + H2O + 4 H(+)(in) = ADP + phosphate + 5 H(+)(out). Produces ATP from ADP in the presence of a proton gradient across the membrane. The alpha chain is a regulatory subunit. The chain is ATP synthase subunit alpha from Christiangramia forsetii (strain DSM 17595 / CGMCC 1.15422 / KT0803) (Gramella forsetii).